A 243-amino-acid chain; its full sequence is Pleckstrin homology domain-containing family B member 1 (243 aa).

One can recognise a PH domain in the interval 21–128 (ALVRGGWLWR…WKTALMEANS (108 aa)).

Binds transducins. Homodimer. Interacts (via PH domain) with MYO1C. Interacts (via PH domain) with MYO7A. Highly expressed in retina and brain. In retina, abundantly expressed in photoreceptors. Isoform 4 is the predominant isoform expressed in mature olfactory receptor neurons and vestibular and cochlear hair cells. Also expressed in cells with possible sensory function, including peripheral retinal ganglion cells, cochlear interdental cells, and neurons of the circumventricular organ (at protein level).

It localises to the membrane. Its subcellular location is the cytoplasm. The sequence is that of Pleckstrin homology domain-containing family B member 1 (Plekhb1) from Mus musculus (Mouse).